Reading from the N-terminus, the 350-residue chain is Cell division protein ZipA (350 aa).

The Periplasmic portion of the chain corresponds to 1-6; that stretch reads MEDLQL. Residues 7–27 form a helical membrane-spanning segment; the sequence is VLFVLGAIAIVAVLVHGFWSI. Residues 28 to 350 lie on the Cytoplasmic side of the membrane; sequence RKQQPRTIKE…QYLARIRANA (323 aa). Disordered regions lie at residues 36 to 55, 65 to 136, and 187 to 213; these read KEQPRTPYAMSPGRRDAEGF, VRKL…PSAR, and RVPADQGQAAHSAATQAEPQAKAEEPL. 2 stretches are compositionally biased toward basic and acidic residues: residues 65-109 and 116-131; these read VRKL…ESRA and AAHERRGHDFRHHEEP.

The protein belongs to the ZipA family. As to quaternary structure, interacts with FtsZ via their C-terminal domains.

It is found in the cell inner membrane. Its function is as follows. Essential cell division protein that stabilizes the FtsZ protofilaments by cross-linking them and that serves as a cytoplasmic membrane anchor for the Z ring. Also required for the recruitment to the septal ring of downstream cell division proteins. The chain is Cell division protein ZipA from Shewanella amazonensis (strain ATCC BAA-1098 / SB2B).